The chain runs to 442 residues: UDP-glycosyltransferase 79B8 (442 aa).

Residues serine 260, 319-321 (VQQ), 336-344 (HCGPGTIWE), and 358-361 (LGDQ) contribute to the UDP-alpha-D-glucose site.

This sequence belongs to the UDP-glycosyltransferase family.

In Arabidopsis thaliana (Mouse-ear cress), this protein is UDP-glycosyltransferase 79B8 (UGT79B8).